Here is a 589-residue protein sequence, read N- to C-terminus: Putative sphingomyelin phosphodiesterase asm-3 (589 aa).

The signal sequence occupies residues 1 to 17 (MLLGLLVLSLAFQGTLA). Positions 18 to 101 (VTECEECKSI…LMKNDCGDFV (84 aa)) constitute a Saposin B-type domain. 3 disulfides stabilise this stretch: Cys-21–Cys-97, Cys-24–Cys-89, and Cys-52–Cys-63. Asn-109 carries an N-linked (GlcNAc...) asparagine glycan. Zn(2+)-binding residues include Asp-139 and His-141. 2 disulfides stabilise this stretch: Cys-154/Cys-159 and Cys-160/Cys-188. Zn(2+) is bound at residue Asp-217. Asn-237 carries N-linked (GlcNAc...) asparagine glycosylation. Residue Asn-257 coordinates Zn(2+). Residue Asn-334 is glycosylated (N-linked (GlcNAc...) asparagine). Zn(2+) contacts are provided by His-364, His-398, and His-400. N-linked (GlcNAc...) asparagine glycosylation occurs at Asn-463. 2 disulfide bridges follow: Cys-530–Cys-535 and Cys-541–Cys-553. A disordered region spans residues 562–589 (KPEPKKNKYSARFATSNERRRGKEECKI). A compositionally biased stretch (basic and acidic residues) spans 578–589 (NERRRGKEECKI).

The protein belongs to the acid sphingomyelinase family. Zn(2+) serves as cofactor.

The protein localises to the secreted. The enzyme catalyses an N-(acyl)-sphingosylphosphocholine + H2O = an N-acyl-sphingoid base + phosphocholine + H(+). It catalyses the reaction a sphingomyelin + H2O = phosphocholine + an N-acylsphing-4-enine + H(+). The catalysed reaction is an N-acyl-15-methylhexadecasphing-4-enine-1-phosphocholine + H2O = an N-acyl-15-methylhexadecasphing-4-enine + phosphocholine + H(+). It participates in lipid metabolism; sphingolipid metabolism. Converts sphingomyelin to ceramide (N-acyl-sphingoid base) and phosphocholine. C.elegans contain specific sphingoid bases, which are unique or different in structure compared to the sphingoid bases found in other animals. Two examples of these distinctive compounds are: 15-methylhexadecasphinganine and 15-methylhexadecasphing-4-enine. The chain is Putative sphingomyelin phosphodiesterase asm-3 (asm-3) from Caenorhabditis elegans.